The chain runs to 216 residues: Major fimbrial subunit (216 aa).

Residues 1–20 form the signal peptide; sequence MKKTLLGSLILLAFAGNVQA. Cys-41 and Cys-81 are disulfide-bonded.

It belongs to the fimbrial protein family.

The protein resides in the fimbrium. Functionally, mediates adherence to oropharyngeal epithelial cells. Helps the airway colonization process. This Haemophilus influenzae protein is Major fimbrial subunit (hifA).